The chain runs to 390 residues: Chorismate synthase (390 aa).

Residues Arg-39 and Arg-45 each contribute to the NADP(+) site. Residues 132 to 134, 253 to 254, Gly-298, 313 to 317, and Arg-339 each bind FMN; these read RSS, NA, and KPIPT.

It belongs to the chorismate synthase family. Homotetramer. FMNH2 serves as cofactor.

It catalyses the reaction 5-O-(1-carboxyvinyl)-3-phosphoshikimate = chorismate + phosphate. Its pathway is metabolic intermediate biosynthesis; chorismate biosynthesis; chorismate from D-erythrose 4-phosphate and phosphoenolpyruvate: step 7/7. Its function is as follows. Catalyzes the anti-1,4-elimination of the C-3 phosphate and the C-6 proR hydrogen from 5-enolpyruvylshikimate-3-phosphate (EPSP) to yield chorismate, which is the branch point compound that serves as the starting substrate for the three terminal pathways of aromatic amino acid biosynthesis. This reaction introduces a second double bond into the aromatic ring system. The chain is Chorismate synthase from Bacillus pumilus (strain SAFR-032).